Reading from the N-terminus, the 168-residue chain is Venom nerve growth factor (168 aa).

The signal sequence occupies residues 1–18 (MSMLCYTLIIAFLIGIWA). Residues 19-123 (APKSEDNVSL…ADSLNRNIRA (105 aa)) constitute a propeptide that is removed on maturation. The N-linked (GlcNAc...) asparagine glycan is linked to asparagine 25. The interval 48 to 70 (LKTSQNTDQHSPAPKKAEDQEFG) is disordered. N-linked (GlcNAc...) asparagine glycosylation occurs at asparagine 148.

This sequence belongs to the NGF-beta family. Homodimer; non-covalently linked. Expressed by the venom gland.

The protein resides in the secreted. Its function is as follows. Nerve growth factor is important for the development and maintenance of the sympathetic and sensory nervous systems. It stimulates division and differentiation of sympathetic and embryonic sensory neurons as well as basal forebrain cholinergic neurons in the brain. Its relevance in the snake venom is not clear. However, it has been shown to inhibit metalloproteinase-dependent proteolysis of platelet glycoprotein Ib alpha, suggesting a metalloproteinase inhibition to prevent metalloprotease autodigestion and/or protection against prey proteases. This is Venom nerve growth factor from Echis ocellatus (Ocellated saw-scaled viper).